Reading from the N-terminus, the 365-residue chain is 7-methylxanthine methyltransferase PCS1 (365 aa).

S-adenosyl-L-homocysteine is bound at residue Tyr-19. Thr-26 provides a ligand contact to caffeine. Positions 62, 67, 99, 100, 134, and 135 each coordinate S-adenosyl-L-homocysteine. Caffeine contacts are provided by Tyr-152, His-155, and Trp-156. Asn-173 is a Mg(2+) binding site. His-221 provides a ligand contact to caffeine. 3 residues coordinate Mg(2+): Asp-259, Phe-261, and Asn-262. Position 317 (Phe-317) interacts with caffeine.

Belongs to the methyltransferase superfamily. Type-7 methyltransferase family. Requires Mg(2+) as cofactor.

It carries out the reaction 1,7-dimethylxanthine + S-adenosyl-L-methionine = caffeine + S-adenosyl-L-homocysteine + H(+). The catalysed reaction is 7-methylxanthine + S-adenosyl-L-methionine = theobromine + S-adenosyl-L-homocysteine + H(+). Its pathway is alkaloid biosynthesis. Involved in the biosynthesis of caffeine. Catalyzes the conversion of 7-methylxanthine (7mX) to theobromine, and, to some extent, the conversion of paraxanthine to caffeine, but seems not able to convert theobromine to caffeine. In Camellia ptilophylla (Cocoa tea), this protein is 7-methylxanthine methyltransferase PCS1.